The sequence spans 294 residues: PAK4-inhibitor INKA2 (294 aa).

Disordered stretches follow at residues 50 to 143, 170 to 198, and 223 to 290; these read ISGG…STLM, PELE…RELG, and LKEK…DINT. Positions 85-99 are enriched in polar residues; sequence SPSNQASLGSTSSGK. The inka box stretch occupies residues 134 to 177; that stretch reads EPDDWTSTLMSRGRNRQPLVLGDNVFADLVGNWLDLPELEKGGE. Positions 171–198 are enriched in basic and acidic residues; sequence ELEKGGEKGETGEAGEPKGGRGQPRELG. Residues 241 to 253 show a composition bias toward basic residues; it reads RSQKVKKRSHSKG.

This sequence belongs to the INKA family. In terms of assembly, interacts with PAK4.

It localises to the nucleus. In terms of biological role, inhibitor of the serine/threonine-protein kinase PAK4. Acts by binding PAK4 in a substrate-like manner, inhibiting the protein kinase activity. This is PAK4-inhibitor INKA2 from Bos taurus (Bovine).